Reading from the N-terminus, the 189-residue chain is UPF0301 protein PputW619_0469 (189 aa).

The protein belongs to the UPF0301 (AlgH) family.

This chain is UPF0301 protein PputW619_0469, found in Pseudomonas putida (strain W619).